The following is a 197-amino-acid chain: Cytochrome c-L (197 aa).

A signal peptide spans 1-25 (MMNRVKIGTALLGLTLAGIALPALA). 3 residues coordinate heme c: C90, C93, and H94.

Binds 1 heme c group covalently per subunit.

Its subcellular location is the periplasm. In terms of biological role, electron acceptor for MDH. Acts in methanol oxidation. In Methylorubrum extorquens (strain ATCC 14718 / DSM 1338 / JCM 2805 / NCIMB 9133 / AM1) (Methylobacterium extorquens), this protein is Cytochrome c-L (moxG).